The sequence spans 101 residues: MIEKMVKESEKGILIDIEVTTNAKKNEIGKINEWRKRIEIRIKEQPIEGKANKAIIKFLKGIFKSEILINSGTTSSQKTVLIPDKTKDDVVTILKKEIKSI.

The protein belongs to the UPF0235 family.

The chain is UPF0235 protein MMP1055 from Methanococcus maripaludis (strain DSM 14266 / JCM 13030 / NBRC 101832 / S2 / LL).